A 285-amino-acid chain; its full sequence is Pantothenate synthetase (285 aa).

Residue 30-37 (MGNLHRGH) participates in ATP binding. His-37 acts as the Proton donor in catalysis. Residue Gln-61 participates in (R)-pantoate binding. Gln-61 serves as a coordination point for beta-alanine. 149 to 152 (GRKD) lines the ATP pocket. Position 155 (Gln-155) interacts with (R)-pantoate. ATP contacts are provided by residues Val-178 and 186 to 189 (LSSR).

The protein belongs to the pantothenate synthetase family. In terms of assembly, homodimer.

It localises to the cytoplasm. It catalyses the reaction (R)-pantoate + beta-alanine + ATP = (R)-pantothenate + AMP + diphosphate + H(+). The protein operates within cofactor biosynthesis; (R)-pantothenate biosynthesis; (R)-pantothenate from (R)-pantoate and beta-alanine: step 1/1. In terms of biological role, catalyzes the condensation of pantoate with beta-alanine in an ATP-dependent reaction via a pantoyl-adenylate intermediate. The chain is Pantothenate synthetase from Halorhodospira halophila (strain DSM 244 / SL1) (Ectothiorhodospira halophila (strain DSM 244 / SL1)).